We begin with the raw amino-acid sequence, 212 residues long: Peptide methionine sulfoxide reductase MsrA (212 aa).

Cys52 is an active-site residue.

It belongs to the MsrA Met sulfoxide reductase family.

The catalysed reaction is L-methionyl-[protein] + [thioredoxin]-disulfide + H2O = L-methionyl-(S)-S-oxide-[protein] + [thioredoxin]-dithiol. The enzyme catalyses [thioredoxin]-disulfide + L-methionine + H2O = L-methionine (S)-S-oxide + [thioredoxin]-dithiol. In terms of biological role, has an important function as a repair enzyme for proteins that have been inactivated by oxidation. Catalyzes the reversible oxidation-reduction of methionine sulfoxide in proteins to methionine. The protein is Peptide methionine sulfoxide reductase MsrA of Shigella dysenteriae serotype 1 (strain Sd197).